The primary structure comprises 341 residues: 3-keto-steroid reductase/17-beta-hydroxysteroid dehydrogenase 7 (341 aa).

Residues 1 to 229 (MRKVVLITGA…VACPGTALTN (229 aa)) lie on the Extracellular side of the membrane. Residue 8 to 15 (TGASSGIG) participates in NAD(+) binding. N-linked (GlcNAc...) asparagine glycosylation occurs at N37. S171 is a binding site for substrate. N178 carries an N-linked (GlcNAc...) asparagine glycan. Y193 (proton acceptor) is an active-site residue. N229 carries an N-linked (GlcNAc...) asparagine glycan. A helical membrane pass occupies residues 230 to 250 (LTYGILPPFIWTLLMPAILLL). At 251–341 (RFFANAFTLT…NQARLSGSCL (91 aa)) the chain is on the cytoplasmic side.

This sequence belongs to the short-chain dehydrogenases/reductases (SDR) family. ERG27 subfamily. Binds to the short form of prolactin receptor. Post-translationally, phosphorylated. Highly expressed in adrenal gland, liver, lung and thymus. Expressed in breast, ovaries, pituitary gland, pregnant uterus, prostate, kidney, lymph node, small intestine, spinal cord and trachea. Weakly expressed in all other tissues tested. In terms of tissue distribution, expressed in eye ciliary epithelial cells and neuroendocrine cells.

It localises to the endoplasmic reticulum membrane. It carries out the reaction 17beta-estradiol + NADP(+) = estrone + NADPH + H(+). The enzyme catalyses a 3beta-hydroxysteroid + NADP(+) = a 3-oxosteroid + NADPH + H(+). It catalyses the reaction 3-dehydro-4alpha-methylzymosterol + NADPH + H(+) = 4alpha-methylzymosterol + NADP(+). The catalysed reaction is zymosterone + NADPH + H(+) = zymosterol + NADP(+). It carries out the reaction 4alpha-methyl-5alpha-cholest-8-en-3-one + NADPH + H(+) = 4alpha-methyl-5alpha-cholest-8-en-3beta-ol + NADP(+). The enzyme catalyses 4alpha-methyl-5alpha-cholest-7-en-3beta-ol + NADP(+) = 4alpha-methyl-5alpha-cholest-7-en-3-one + NADPH + H(+). It catalyses the reaction 5alpha-cholest-8-en-3-one + NADPH + H(+) = 5alpha-cholest-8-en-3beta-ol + NADP(+). The catalysed reaction is 5alpha-androstane-3beta,17beta-diol + NADP(+) = 17beta-hydroxy-5alpha-androstan-3-one + NADPH + H(+). It carries out the reaction progesterone + NADPH + H(+) = 3beta-hydroxypregn-4-ene-20-one + NADP(+). The protein operates within steroid biosynthesis; estrogen biosynthesis. Its pathway is steroid biosynthesis; zymosterol biosynthesis; zymosterol from lanosterol: step 5/6. Estradiol 17-beta-dehydrogenase and dihydrotestosterone oxidoreductase activities are selectively inhibited by 4-methyl-4-aza-5alpha-androstane derivatives, such as 17beta-[(N-Heptyl)methylamino]-4-aza-5r-androstan-3-one and 17beta-(N-Decylformamido)-4-aza-5r-androstan-3-one. In terms of biological role, bifunctional enzyme involved in steroid-hormone metabolism and cholesterol biosynthesis. Catalyzes the NADP(H)-dependent reduction of estrogens and androgens and regulates the biological potency of these steroids. Converts estrone (E1) to a more potent estrogen, 17beta-estradiol (E2). Converts dihydrotestosterone (DHT) to its inactive form 5a-androstane-3b,17b-diol. Converts moderately progesterone to 3beta-hydroxypregn-4-ene-20-one, leading to its inactivation. Additionally, participates in the post-squalene cholesterol biosynthesis, as a 3-ketosteroid reductase. Does not have enzymatic activities toward E1 and DHT. In Homo sapiens (Human), this protein is 3-keto-steroid reductase/17-beta-hydroxysteroid dehydrogenase 7 (HSD17B7).